The chain runs to 257 residues: Deoxyribose-phosphate aldolase (257 aa).

Aspartate 102 (proton donor/acceptor) is an active-site residue. The Schiff-base intermediate with acetaldehyde role is filled by lysine 166. Lysine 198 serves as the catalytic Proton donor/acceptor.

Belongs to the DeoC/FbaB aldolase family. DeoC type 2 subfamily.

It is found in the cytoplasm. It carries out the reaction 2-deoxy-D-ribose 5-phosphate = D-glyceraldehyde 3-phosphate + acetaldehyde. It functions in the pathway carbohydrate degradation; 2-deoxy-D-ribose 1-phosphate degradation; D-glyceraldehyde 3-phosphate and acetaldehyde from 2-deoxy-alpha-D-ribose 1-phosphate: step 2/2. Its function is as follows. Catalyzes a reversible aldol reaction between acetaldehyde and D-glyceraldehyde 3-phosphate to generate 2-deoxy-D-ribose 5-phosphate. The chain is Deoxyribose-phosphate aldolase from Aeromonas salmonicida (strain A449).